The chain runs to 431 residues: Nuclear receptor subfamily 1 group I member 2 (431 aa).

2 NR C4-type zinc fingers span residues 38-58 (CRVC…CEGC) and 74-99 (CPFR…LRKC). A DNA-binding region (nuclear receptor) is located at residues 38–104 (CRVCGDKANG…RLRKCLESGM (67 aa)). A Bipartite nuclear localization signal motif is present at residues 63-89 (RRAMKRNVRLRCPFRKGTCEITRKTRR). Residues 105–142 (KKEMIMSDAAVEQRRALIKRKKREKIEAPPPGGQGLTE) are hinge. In terms of domain architecture, NR LBD spans 143 to 430 (EQQALIQELM…LMQELFSSTD (288 aa)). Residues Ser244 and 282–285 (ILRF) each bind hyperforin.

Belongs to the nuclear hormone receptor family. NR1 subfamily. Heterodimer with RXRA. Interacts with NCOA1. Interacts (via domain NR LBD) with CRY1 and CRY2 in a ligand-dependent manner.

The protein resides in the nucleus. Functionally, nuclear receptor that binds and is activated by a variety of endogenous and xenobiotic compounds. Transcription factor that activates the transcription of multiple genes involved in the metabolism and secretion of potentially harmful xenobiotics, endogenous compounds and drugs. Response to specific ligands is species-specific, due to differences in the ligand-binding domain. Activated by naturally occurring steroids, such as pregnenolone and progesterone. Binds to a response element in the promoters of the CYP3A4 and ABCB1/MDR1 genes. The protein is Nuclear receptor subfamily 1 group I member 2 (Nr1i2) of Rattus norvegicus (Rat).